The sequence spans 335 residues: Antigen-presenting glycoprotein CD1d (335 aa).

An N-terminal signal peptide occupies residues 1-17 (MGCLLFLVLLEFQKIWG). At 18–304 (SFEAPQTSFP…WDGKRVSRGL (287 aa)) the chain is on the extracellular side. Residues asparagine 38 and asparagine 60 are each glycosylated (N-linked (GlcNAc...) asparagine). Aspartate 98 is an a D-galactosylceramide binding site. 2 disulfides stabilise this stretch: cysteine 120/cysteine 184 and cysteine 224/cysteine 279. Asparagine 126 carries an N-linked (GlcNAc...) asparagine glycan. A D-galactosylceramide contacts are provided by residues aspartate 169, 169–172 (DQGT), and threonine 172. The region spanning 185–295 (PELVKGLMQT…LGDQDIILYW (111 aa)) is the Ig-like domain. The helical transmembrane segment at 305–325 (IVVLVILVFVLLFVGGLVFWF) threads the bilayer. Over 326-335 (RKHRRYQDIS) the chain is Cytoplasmic. The Internalization signal signature appears at 331–334 (YQDI).

As to quaternary structure, heterodimer with B2M (beta-2-microglobulin). Interacts with MHC II and CD74. Expressed on cortical thymocytes, on certain T-cell leukemias, and in various other tissues.

It localises to the cell membrane. It is found in the basolateral cell membrane. The protein resides in the endosome membrane. The protein localises to the lysosome membrane. Its subcellular location is the endoplasmic reticulum membrane. Its function is as follows. Antigen-presenting protein that binds self and non-self glycolipids and presents them to T-cell receptors on natural killer T-cells. The sequence is that of Antigen-presenting glycoprotein CD1d (CD1D) from Ovis aries (Sheep).